The sequence spans 157 residues: UPF0225 protein Psyr_3863 (157 aa).

This sequence belongs to the UPF0225 family.

The sequence is that of UPF0225 protein Psyr_3863 from Pseudomonas syringae pv. syringae (strain B728a).